The sequence spans 239 residues: Large ribosomal subunit protein uL2 (239 aa).

The interval 200-239 (VNHPHGGKEHHIGRPSTVSRRAPPGRKVGHIAARRTGRRK) is disordered. Positions 222–239 (PPGRKVGHIAARRTGRRK) are enriched in basic residues.

Belongs to the universal ribosomal protein uL2 family. In terms of assembly, part of the 50S ribosomal subunit. Forms a bridge to the 30S subunit in the 70S ribosome.

Its function is as follows. One of the primary rRNA binding proteins. Required for association of the 30S and 50S subunits to form the 70S ribosome, for tRNA binding and peptide bond formation. It has been suggested to have peptidyltransferase activity; this is somewhat controversial. Makes several contacts with the 16S rRNA in the 70S ribosome. The sequence is that of Large ribosomal subunit protein uL2 from Thermococcus kodakarensis (strain ATCC BAA-918 / JCM 12380 / KOD1) (Pyrococcus kodakaraensis (strain KOD1)).